The sequence spans 321 residues: Methionyl-tRNA formyltransferase (321 aa).

113–116 is a binding site for (6S)-5,6,7,8-tetrahydrofolate; that stretch reads SILP.

This sequence belongs to the Fmt family.

It carries out the reaction L-methionyl-tRNA(fMet) + (6R)-10-formyltetrahydrofolate = N-formyl-L-methionyl-tRNA(fMet) + (6S)-5,6,7,8-tetrahydrofolate + H(+). Functionally, attaches a formyl group to the free amino group of methionyl-tRNA(fMet). The formyl group appears to play a dual role in the initiator identity of N-formylmethionyl-tRNA by promoting its recognition by IF2 and preventing the misappropriation of this tRNA by the elongation apparatus. This Vibrio atlanticus (strain LGP32) (Vibrio splendidus (strain Mel32)) protein is Methionyl-tRNA formyltransferase.